We begin with the raw amino-acid sequence, 485 residues long: Glutamyl-tRNA(Gln) amidotransferase subunit A (485 aa).

Residues Lys79 and Ser154 each act as charge relay system in the active site. Catalysis depends on Ser178, which acts as the Acyl-ester intermediate.

Belongs to the amidase family. GatA subfamily. As to quaternary structure, heterotrimer of A, B and C subunits.

The enzyme catalyses L-glutamyl-tRNA(Gln) + L-glutamine + ATP + H2O = L-glutaminyl-tRNA(Gln) + L-glutamate + ADP + phosphate + H(+). Functionally, allows the formation of correctly charged Gln-tRNA(Gln) through the transamidation of misacylated Glu-tRNA(Gln) in organisms which lack glutaminyl-tRNA synthetase. The reaction takes place in the presence of glutamine and ATP through an activated gamma-phospho-Glu-tRNA(Gln). The sequence is that of Glutamyl-tRNA(Gln) amidotransferase subunit A from Geobacillus stearothermophilus (Bacillus stearothermophilus).